The chain runs to 745 residues: Phosphate transporter PHO1 homolog 4 (745 aa).

The SPX domain occupies 1–290; it reads MRFGKEFVSQ…KRNAAKLYME (290 aa). The Cytoplasmic segment spans residues 1–342; sequence MRFGKEFVSQ…KINKERHLIT (342 aa). Residues 343–363 form a helical membrane-spanning segment; the sequence is FSTGFFFGCGISLIVALGLII. Over 364-383 the chain is Extracellular; the sequence is HARNIMGTPGQRTYMETMFP. Residues 384–404 traverse the membrane as a helical segment; the sequence is LYRFFGFVVLHMDVYAANIYF. Over 405–427 the chain is Cytoplasmic; sequence WRRYRVNYSFIFGFKQGTELGYR. A helical membrane pass occupies residues 428–448; that stretch reads HVLLLSFGLGTLSLCAVLLNL. Residues 449-464 are Extracellular-facing; the sequence is DMEMDAQTKDYRLVTE. A helical membrane pass occupies residues 465–485; that stretch reads LIPLFLLVLVIIIVLCPFNIL. Topologically, residues 486–615 are cytoplasmic; that stretch reads YRSSRFFFLS…YTLNRGSNWN (130 aa). An EXS domain is found at 550-744; that stretch reads TSNIGFRTFY…NYEEDGDHHN (195 aa). Residues 616-636 form a helical membrane-spanning segment; the sequence is ITAWVFSGVATFYGTYWDIVL. Over 637–660 the chain is Extracellular; it reads DWGLLQRGCKNSFLRDKLLVPHKT. Residues 661–681 traverse the membrane as a helical segment; the sequence is VYYAAMVLNVLLRLVWLQTVL. Residues 682 to 745 lie on the Cytoplasmic side of the membrane; the sequence is DLKFSFLHRE…YEEDGDHHNN (64 aa).

Belongs to the SYG1 (TC 2.A.94) family. As to expression, expressed in root epidermis and cortex, leaf hydathodes, pollen grains and stigma apex.

It localises to the cell membrane. May transport inorganic phosphate (Pi). The polypeptide is Phosphate transporter PHO1 homolog 4 (PHO1-H4) (Arabidopsis thaliana (Mouse-ear cress)).